Reading from the N-terminus, the 434-residue chain is 3-phosphoshikimate 1-carboxyvinyltransferase (434 aa).

The 3-phosphoshikimate site is built by lysine 15, serine 16, and arginine 20. Residue lysine 15 participates in phosphoenolpyruvate binding. Phosphoenolpyruvate-binding residues include glycine 96 and arginine 124. 3-phosphoshikimate contacts are provided by serine 169, glutamine 171, serine 195, aspartate 319, and lysine 346. Glutamine 171 serves as a coordination point for phosphoenolpyruvate. The active-site Proton acceptor is the aspartate 319. Phosphoenolpyruvate-binding residues include arginine 350 and arginine 394.

This sequence belongs to the EPSP synthase family. Monomer.

Its subcellular location is the cytoplasm. It catalyses the reaction 3-phosphoshikimate + phosphoenolpyruvate = 5-O-(1-carboxyvinyl)-3-phosphoshikimate + phosphate. It participates in metabolic intermediate biosynthesis; chorismate biosynthesis; chorismate from D-erythrose 4-phosphate and phosphoenolpyruvate: step 6/7. Functionally, catalyzes the transfer of the enolpyruvyl moiety of phosphoenolpyruvate (PEP) to the 5-hydroxyl of shikimate-3-phosphate (S3P) to produce enolpyruvyl shikimate-3-phosphate and inorganic phosphate. The protein is 3-phosphoshikimate 1-carboxyvinyltransferase of Prosthecochloris aestuarii (strain DSM 271 / SK 413).